The primary structure comprises 842 residues: Glucans biosynthesis glucosyltransferase H (842 aa).

Transmembrane regions (helical) follow at residues 140-160 (ILLLLTLSQTVVATWYMKTIL), 194-214 (ILILFAVLFCWVSAGFWTALM), 513-533 (VFLTGVMSYLSAPLWFMFLAL), 568-588 (IALFASTMVLLFLPKLLSIIL), 615-635 (VLLAPVRMLFHTVFVVSAFLG), 656-676 (FMRHGSQLLLGLVWAVGMAWL), and 680-700 (FLFWLAPIVVSLILSPFVSAI).

Belongs to the glycosyltransferase 2 family. OpgH subfamily.

It is found in the cell inner membrane. Its pathway is glycan metabolism; osmoregulated periplasmic glucan (OPG) biosynthesis. Functionally, involved in the biosynthesis of osmoregulated periplasmic glucans (OPGs). This Klebsiella pneumoniae subsp. pneumoniae (strain ATCC 700721 / MGH 78578) protein is Glucans biosynthesis glucosyltransferase H.